We begin with the raw amino-acid sequence, 563 residues long: RUN and FYVE domain-containing protein 4 (563 aa).

In terms of domain architecture, RUN spans 33 to 166; that stretch reads TETSAELHRL…VAFNLDLQRP (134 aa). Disordered regions lie at residues 176-327 and 375-397; these read SESR…TTEG and KKSS…MQED. 2 stretches are compositionally biased toward basic and acidic residues: residues 196-205 and 263-284; these read GFPEEVRCSR and ETER…RKFL. The segment covering 285–295 has biased composition (polar residues); the sequence is ENSTASIQQQR. A compositionally biased stretch (basic and acidic residues) spans 297-312; it reads RAKDVKMQLTGRKVEG. Residues 385-396 show a composition bias toward polar residues; the sequence is EWTGVTSGTMQE. A coiled-coil region spans residues 421 to 462; it reads QAQCQEQLRAQEAELQALQEQLSRCQKERALLQVKLEQKQQE. The FYVE-type zinc-finger motif lies at 428-558; the sequence is LRAQEAELQA…RCCPTCAQQE (131 aa). Cys-513, Cys-516, Cys-529, Cys-532, Cys-537, Cys-540, Cys-551, and Cys-554 together coordinate Zn(2+).

In terms of assembly, forms homodimers (via coiled coil domain). Forms a ternary complex with RAB7A and LAMP2; the interaction with RAB7A is mediated by RUFY4 (via RUN and coiled coil domains). Interacts with GTP-, but not GDP-bound ARL8A and ARL8B. Interacts with dynactin/DCTN1 and the dynein intermediate chain DYNC1I1/2. As to expression, expressed in dendritic cells.

The protein resides in the cytoplasmic vesicle. It localises to the autophagosome. The protein localises to the lysosome. ARL8 effector that promotes the coupling of endolysosomes to dynein-dynactin for retrograde transport along microtubules. Acts by binding both GTP-bound ARL8 and dynein-dynactin. In nonneuronal cells, promotes concentration of endolysosomes in the juxtanuclear area. In hippocampal neurons, drives retrograde transport of endolysosomes from the axon to the soma. Positive regulator of macroautophagy in dendritic cells. Increases autophagic flux, probably by stimulating both autophagosome formation and facilitating tethering with lysosomes. Binds to phosphatidylinositol 3-phosphate (PtdIns3P) through its FYVE-type zinc finger. Positive regulator of osteosclast bone-resorbing activity, possibly by promoting late endosome-lysosome fusion by acting as an adapter protein between RAB7A on late endosomes and LAMP2 on primary lysosomes. This chain is RUN and FYVE domain-containing protein 4 (Rufy4), found in Mus musculus (Mouse).